The sequence spans 110 residues: Small ribosomal subunit protein bS16 (110 aa).

Positions Ala87–Lys110 are disordered.

The protein belongs to the bacterial ribosomal protein bS16 family.

The chain is Small ribosomal subunit protein bS16 from Rhodopseudomonas palustris (strain HaA2).